Here is an 80-residue protein sequence, read N- to C-terminus: U1-nemetoxin-Csp1a (80 aa).

A signal peptide spans 1–20 (MKYFVVFCVLIIAVAAFTSA). Positions 21–41 (AEDGEVFEENPLEFPKTIQKR) are excised as a propeptide. 4 disulfides stabilise this stretch: Cys-42-Cys-56, Cys-49-Cys-60, Cys-55-Cys-77, and Cys-66-Cys-73.

The protein belongs to the neurotoxin 13 (insecticidal toxin ABC) family. 02 (Calisoga) subfamily. As to expression, expressed by the venom gland.

It is found in the secreted. In terms of biological role, causes paralysis to insect larvae (H.virescens). This toxin is active only on insects. The polypeptide is U1-nemetoxin-Csp1a (Calisoga sp. (Spider)).